Consider the following 339-residue polypeptide: Phospho-N-acetylmuramoyl-pentapeptide-transferase (339 aa).

A run of 10 helical transmembrane segments spans residues 4 to 24 (TTII…PFFI), 53 to 73 (MGGT…AFVL), 80 to 100 (AFGA…IGFL), 113 to 133 (GLTA…FYLV), 145 to 165 (LFGF…FWVV), 176 to 196 (GIDG…SVIA), 202 to 222 (FDVL…FVYN), 228 to 248 (VFMG…ISIT), 253 to 273 (WTLL…MLQV), and 318 to 338 (VDFF…AILY).

This sequence belongs to the glycosyltransferase 4 family. MraY subfamily. The cofactor is Mg(2+).

The protein localises to the cell membrane. The catalysed reaction is UDP-N-acetyl-alpha-D-muramoyl-L-alanyl-gamma-D-glutamyl-L-lysyl-D-alanyl-D-alanine + di-trans,octa-cis-undecaprenyl phosphate = Mur2Ac(oyl-L-Ala-gamma-D-Glu-L-Lys-D-Ala-D-Ala)-di-trans,octa-cis-undecaprenyl diphosphate + UMP. The protein operates within cell wall biogenesis; peptidoglycan biosynthesis. Its function is as follows. Catalyzes the initial step of the lipid cycle reactions in the biosynthesis of the cell wall peptidoglycan: transfers peptidoglycan precursor phospho-MurNAc-pentapeptide from UDP-MurNAc-pentapeptide onto the lipid carrier undecaprenyl phosphate, yielding undecaprenyl-pyrophosphoryl-MurNAc-pentapeptide, known as lipid I. This chain is Phospho-N-acetylmuramoyl-pentapeptide-transferase, found in Streptococcus mutans serotype c (strain ATCC 700610 / UA159).